Here is a 238-residue protein sequence, read N- to C-terminus: MKVFDVHKFDMKKEQDFLQVQFNLKNRINLSPTIHPDSINTCAGVDLAYWEQDGEPYGVCCIIVIDADTKEVIEKVHSMGRISVPYVSGFLAFRELPLIIEAAKKLETEPDVFLFDGNGYLHYNHMGVATHAAFFLGKPTIGIAKTYLKIKGCDFVTPEIEVGAYTDIIIDGEVYGRALRTRRDVKPIFLSCGNYIDLDSSYQITMSLINQESRLPIPVRLADLETHVLRTFYQKNHV.

Asp46 and Asp116 together coordinate Mg(2+).

Belongs to the endonuclease V family. Mg(2+) is required as a cofactor.

It is found in the cytoplasm. It carries out the reaction Endonucleolytic cleavage at apurinic or apyrimidinic sites to products with a 5'-phosphate.. Functionally, DNA repair enzyme involved in the repair of deaminated bases. Selectively cleaves double-stranded DNA at the second phosphodiester bond 3' to a deoxyinosine leaving behind the intact lesion on the nicked DNA. The protein is Endonuclease V of Bacillus subtilis (strain 168).